Reading from the N-terminus, the 498-residue chain is Glycerol kinase (498 aa).

An ADP-binding site is contributed by T12. ATP is bound by residues T12, T13, and S14. T12 serves as a coordination point for sn-glycerol 3-phosphate. R16 provides a ligand contact to ADP. R82, E83, Y134, and D244 together coordinate sn-glycerol 3-phosphate. Residues R82, E83, Y134, D244, and Q245 each coordinate glycerol. ADP-binding residues include T266 and G310. Residues T266, G310, Q314, and G411 each coordinate ATP. ADP-binding residues include G411 and N415.

The protein belongs to the FGGY kinase family.

The enzyme catalyses glycerol + ATP = sn-glycerol 3-phosphate + ADP + H(+). It participates in polyol metabolism; glycerol degradation via glycerol kinase pathway; sn-glycerol 3-phosphate from glycerol: step 1/1. With respect to regulation, inhibited by fructose 1,6-bisphosphate (FBP). Key enzyme in the regulation of glycerol uptake and metabolism. Catalyzes the phosphorylation of glycerol to yield sn-glycerol 3-phosphate. This is Glycerol kinase from Chloroflexus aggregans (strain MD-66 / DSM 9485).